A 211-amino-acid chain; its full sequence is Probable septum site-determining protein MinC (211 aa).

It belongs to the MinC family. As to quaternary structure, interacts with MinD and FtsZ.

Cell division inhibitor that blocks the formation of polar Z ring septums. Rapidly oscillates between the poles of the cell to destabilize FtsZ filaments that have formed before they mature into polar Z rings. Prevents FtsZ polymerization. In Clostridium perfringens (strain 13 / Type A), this protein is Probable septum site-determining protein MinC.